The chain runs to 347 residues: N-acetyl-gamma-glutamyl-phosphate reductase (347 aa).

Cys152 is a catalytic residue.

It belongs to the NAGSA dehydrogenase family. Type 1 subfamily.

It is found in the cytoplasm. It catalyses the reaction N-acetyl-L-glutamate 5-semialdehyde + phosphate + NADP(+) = N-acetyl-L-glutamyl 5-phosphate + NADPH + H(+). It participates in amino-acid biosynthesis; L-arginine biosynthesis; N(2)-acetyl-L-ornithine from L-glutamate: step 3/4. Functionally, catalyzes the NADPH-dependent reduction of N-acetyl-5-glutamyl phosphate to yield N-acetyl-L-glutamate 5-semialdehyde. This chain is N-acetyl-gamma-glutamyl-phosphate reductase, found in Neisseria meningitidis serogroup A / serotype 4A (strain DSM 15465 / Z2491).